Consider the following 501-residue polypeptide: Bifunctional purine biosynthesis protein PurH (501 aa).

One can recognise an MGS-like domain in the interval 1 to 144 (MKKRALISVF…KNFKDVVVLS (144 aa)).

The protein belongs to the PurH family.

The enzyme catalyses (6R)-10-formyltetrahydrofolate + 5-amino-1-(5-phospho-beta-D-ribosyl)imidazole-4-carboxamide = 5-formamido-1-(5-phospho-D-ribosyl)imidazole-4-carboxamide + (6S)-5,6,7,8-tetrahydrofolate. It catalyses the reaction IMP + H2O = 5-formamido-1-(5-phospho-D-ribosyl)imidazole-4-carboxamide. It participates in purine metabolism; IMP biosynthesis via de novo pathway; 5-formamido-1-(5-phospho-D-ribosyl)imidazole-4-carboxamide from 5-amino-1-(5-phospho-D-ribosyl)imidazole-4-carboxamide (10-formyl THF route): step 1/1. The protein operates within purine metabolism; IMP biosynthesis via de novo pathway; IMP from 5-formamido-1-(5-phospho-D-ribosyl)imidazole-4-carboxamide: step 1/1. This chain is Bifunctional purine biosynthesis protein PurH, found in Clostridium perfringens (strain SM101 / Type A).